A 188-amino-acid chain; its full sequence is Elongation factor P (188 aa).

N6-(3,6-diaminohexanoyl)-5-hydroxylysine is present on Lys34.

This sequence belongs to the elongation factor P family. May be beta-lysylated on the epsilon-amino group of Lys-34 by the combined action of EpmA and EpmB, and then hydroxylated on the C5 position of the same residue by EpmC (if this protein is present). Lysylation is critical for the stimulatory effect of EF-P on peptide-bond formation. The lysylation moiety may extend toward the peptidyltransferase center and stabilize the terminal 3-CCA end of the tRNA. Hydroxylation of the C5 position on Lys-34 may allow additional potential stabilizing hydrogen-bond interactions with the P-tRNA.

The protein resides in the cytoplasm. It participates in protein biosynthesis; polypeptide chain elongation. Functionally, involved in peptide bond synthesis. Alleviates ribosome stalling that occurs when 3 or more consecutive Pro residues or the sequence PPG is present in a protein, possibly by augmenting the peptidyl transferase activity of the ribosome. Modification of Lys-34 is required for alleviation. The polypeptide is Elongation factor P (Pseudoalteromonas translucida (strain TAC 125)).